The following is a 250-amino-acid chain: Proteasome subunit alpha (250 aa).

Belongs to the peptidase T1A family. In terms of assembly, the 20S proteasome core is composed of 14 alpha and 14 beta subunits that assemble into four stacked heptameric rings, resulting in a barrel-shaped structure. The two inner rings, each composed of seven catalytic beta subunits, are sandwiched by two outer rings, each composed of seven alpha subunits. The catalytic chamber with the active sites is on the inside of the barrel. Has a gated structure, the ends of the cylinder being occluded by the N-termini of the alpha-subunits. Is capped by the proteasome-associated ATPase, ARC.

The protein localises to the cytoplasm. Its pathway is protein degradation; proteasomal Pup-dependent pathway. Its activity is regulated as follows. The formation of the proteasomal ATPase ARC-20S proteasome complex, likely via the docking of the C-termini of ARC into the intersubunit pockets in the alpha-rings, may trigger opening of the gate for substrate entry. Interconversion between the open-gate and close-gate conformations leads to a dynamic regulation of the 20S proteasome proteolysis activity. Functionally, component of the proteasome core, a large protease complex with broad specificity involved in protein degradation. This Mycobacterium sp. (strain JLS) protein is Proteasome subunit alpha.